Consider the following 767-residue polypeptide: MAKQLLLLLLLFIVHGVESAPPPHSCDPSNPTTKLYQFCRTDLPIGKRARDLVSRLTIDEKISQLVNTAPGIPRLGVPAYEWWSEALHGVAYAGPGIRFNGTVKAATSFPQVILTAASFDSYEWFRIAQVIGKEARGVYNAGQANGMTFWAPNINIFRDPRWGRGQETPGEDPMMTGTYAVAYVRGLQGDSFDGRKTLSNHLQASACCKHFTAYDLDRWKGITRYVFNAQVSLADLAETYQPPFKKCIEEGRASGIMCAYNRVNGIPSCADPNLLTRTARGQWAFRGYITSDCDAVSIIYDAQGYAKSPEDAVADVLKAGMDVNCGSYLQKHTKSALQQKKVSETDIDRALLNLFSVRIRLGLFNGDPTKLPYGNISPNEVCSPAHQALALDAARNGIVLLKNNLKLLPFSKRSVSSLAVIGPNAHVVKTLLGNYAGPPCKTVTPLDALRSYVKNAVYHQGCDSVACSNAAIDQAVAIAKNADHVVLIMGLDQTQEKEDFDRVDLSLPGKQQELITSVANAAKKPVVLVLICGGPVDISFAANNNKIGSIIWAGYPGEAGGIAISEIIFGDHNPGGRLPVTWYPQSFVNIQMTDMRMRSATGYPGRTYKFYKGPKVYEFGHGLSYSAYSYRFKTLAETNLYLNQSKAQTNSDSVRYTLVSEMGKEGCDVAKTKVTVEVENQGEMAGKHPVLMFARHERGGEDGKRAEKQLVGFKSIVLSNGEKAEMEFEIGLCEHLSRANEFGVMVLEEGKYFLTVGDSELPLIVNV.

The N-terminal stretch at 1–19 (MAKQLLLLLLLFIVHGVES) is a signal peptide. N100 is a glycosylation site (N-linked (GlcNAc...) asparagine). The active site involves D292. N643 carries N-linked (GlcNAc...) asparagine glycosylation.

It belongs to the glycosyl hydrolase 3 family.

It is found in the secreted. The protein resides in the extracellular space. It localises to the extracellular matrix. The sequence is that of Probable beta-D-xylosidase 7 (BXL7) from Arabidopsis thaliana (Mouse-ear cress).